Here is a 277-residue protein sequence, read N- to C-terminus: 4-hydroxy-tetrahydrodipicolinate reductase (277 aa).

Residues 11-16 (GALGRM) and 110-112 (GTT) each bind NAD(+). The active-site Proton donor/acceptor is the His-166. His-167 is a binding site for (S)-2,3,4,5-tetrahydrodipicolinate. Catalysis depends on Lys-170, which acts as the Proton donor. A (S)-2,3,4,5-tetrahydrodipicolinate-binding site is contributed by 176–177 (GT).

The protein belongs to the DapB family.

The protein resides in the cytoplasm. The enzyme catalyses (S)-2,3,4,5-tetrahydrodipicolinate + NAD(+) + H2O = (2S,4S)-4-hydroxy-2,3,4,5-tetrahydrodipicolinate + NADH + H(+). The catalysed reaction is (S)-2,3,4,5-tetrahydrodipicolinate + NADP(+) + H2O = (2S,4S)-4-hydroxy-2,3,4,5-tetrahydrodipicolinate + NADPH + H(+). It participates in amino-acid biosynthesis; L-lysine biosynthesis via DAP pathway; (S)-tetrahydrodipicolinate from L-aspartate: step 4/4. Its function is as follows. Catalyzes the conversion of 4-hydroxy-tetrahydrodipicolinate (HTPA) to tetrahydrodipicolinate. The polypeptide is 4-hydroxy-tetrahydrodipicolinate reductase (Parasynechococcus marenigrum (strain WH8102)).